The following is a 351-amino-acid chain: Photosystem II D2 protein (351 aa).

A helical membrane pass occupies residues 39–59 (TAYLAVGGWFTGTTFVTSWYT). Position 116 (His116) interacts with chlorophyll a. The helical transmembrane segment at 123–139 (GFCLRQFEIARLVGIRP) threads the bilayer. Gln128 and Asn141 together coordinate pheophytin a. Residues 151-164 (IFVSVFLLYPLGQA) form a helical membrane-spanning segment. Residue His196 coordinates chlorophyll a. The helical transmembrane segment at 206-226 (GALLCAIHGATVENTLFEDGD) threads the bilayer. His213 and Phe260 together coordinate a plastoquinone. His213 is a Fe cation binding site. Residue His267 participates in Fe cation binding. Residues 277 to 293 (GLWTSAIGIVGLALNLR) form a helical membrane-spanning segment.

The protein belongs to the reaction center PufL/M/PsbA/D family. In terms of assembly, PSII is composed of 1 copy each of membrane proteins PsbA, PsbB, PsbC, PsbD, PsbE, PsbF, PsbH, PsbI, PsbJ, PsbK, PsbL, PsbM, PsbT, PsbX, PsbY, PsbZ, Psb30/Ycf12, at least 3 peripheral proteins of the oxygen-evolving complex and a large number of cofactors. It forms dimeric complexes. Requires The D1/D2 heterodimer binds P680, chlorophylls that are the primary electron donor of PSII, and subsequent electron acceptors. It shares a non-heme iron and each subunit binds pheophytin, quinone, additional chlorophylls, carotenoids and lipids. There is also a Cl(-1) ion associated with D1 and D2, which is required for oxygen evolution. The PSII complex binds additional chlorophylls, carotenoids and specific lipids. as cofactor.

It is found in the plastid. The protein resides in the chloroplast thylakoid membrane. The catalysed reaction is 2 a plastoquinone + 4 hnu + 2 H2O = 2 a plastoquinol + O2. Functionally, photosystem II (PSII) is a light-driven water:plastoquinone oxidoreductase that uses light energy to abstract electrons from H(2)O, generating O(2) and a proton gradient subsequently used for ATP formation. It consists of a core antenna complex that captures photons, and an electron transfer chain that converts photonic excitation into a charge separation. The D1/D2 (PsbA/PsbD) reaction center heterodimer binds P680, the primary electron donor of PSII as well as several subsequent electron acceptors. D2 is needed for assembly of a stable PSII complex. In Heterosigma akashiwo (strain NIES-293 / 8280G21-1), this protein is Photosystem II D2 protein.